Consider the following 600-residue polypeptide: Kelch-like protein 24 (600 aa).

The region spanning 66–133 is the BTB domain; sequence TDVIICVEGK…VYTGKVKITT (68 aa). Residues 168–270 form the BACK domain; it reads CLGIQRFADT…HPNYFVQTVE (103 aa). Kelch repeat units lie at residues 314 to 363, 365 to 407, 408 to 454, 456 to 502, 504 to 544, and 546 to 592; these read VIVV…ALRN, ILVS…VLLG, KVYV…SCVG, LFVI…SLNN, IYVA…VCNG, and IYIL…TIHR.

As to quaternary structure, forms homodimers. Interacts with GRIK2. Component of the BCR(KLHL24) E3 ubiquitin ligase complex, composed of CUL3, RBX1 and KLHL24. Interacts with CUL3. Interacts with KRT14. Post-translationally, autoubiquitinated. Autoubiquitination leads to proteasomal degradation and is necessary to control KLHL24 levels. Expressed in the skin. Found in keratinocytes, dermal fibroblasts, and melanocytes. Basal-layer keratinocytes have lower KLHL24 expression than suprabasal keratinocytes. Expressed in the brain, spinal cord, liver, testis, heart and at higher levels in the skeletal muscle.

Its subcellular location is the perikaryon. It is found in the cell projection. It localises to the axon. The protein localises to the cytoplasm. The protein resides in the cell junction. Its subcellular location is the desmosome. It is found in the adherens junction. Necessary to maintain the balance between intermediate filament stability and degradation, a process that is essential for skin integrity. As part of the BCR(KLHL24) E3 ubiquitin ligase complex, mediates ubiquitination of KRT14 and controls its levels during keratinocytes differentiation. Specifically reduces kainate receptor-mediated currents in hippocampal neurons, most probably by modulating channel properties. Has a crucial role in cardiac development and function. In Homo sapiens (Human), this protein is Kelch-like protein 24 (KLHL24).